The sequence spans 152 residues: Mid1-interacting protein 1A (152 aa).

Over residues 87 to 105 the composition is skewed to basic and acidic residues; sequence SEDQRRKKDTSASEPVRTE. The segment at 87-109 is disordered; it reads SEDQRRKKDTSASEPVRTEEESD.

Belongs to the SPOT14 family. As to expression, expressed for a short period in the cells that will produce the enveloping layer (EVL).

Its subcellular location is the nucleus. The protein resides in the cytoplasm. It is found in the cytoskeleton. Involved in stabilization of microtubules. May play a role in the regulation of lipogenesis. This chain is Mid1-interacting protein 1A (mid1ip1a), found in Danio rerio (Zebrafish).